Reading from the N-terminus, the 244-residue chain is MGPPSAAPRGGHRPWQGLLITASLLTFWHPPTTVQFTIEALPSSAAEGKDVLLLACNISETIQAYYWHKGKTAEGSPLIAGYITDIQANIPGAAYSGRETVYPNGSLLFQNITLEDAGSYTLRTINASYDSDQATGQLHVHQNNVPGLPVGAVAGIVTGVLVGVALVAALVCFLLLSRTGRASIQRDLREQPPPASTPGHGPSHRSTFSAPLPSPRTATPIYEELLYSDANIYCQIDHKADVVS.

The first 35 residues, 1-35 (MGPPSAAPRGGHRPWQGLLITASLLTFWHPPTTVQ), serve as a signal peptide directing secretion. An Ig-like V-type domain is found at 36-139 (FTIEALPSSA…DSDQATGQLH (104 aa)). Over 36 to 155 (FTIEALPSSA…PGLPVGAVAG (120 aa)) the chain is Extracellular. N-linked (GlcNAc...) asparagine glycosylation is found at Asn-57, Asn-104, Asn-111, and Asn-126. The helical transmembrane segment at 156-176 (IVTGVLVGVALVAALVCFLLL) threads the bilayer. Residues 177–244 (SRTGRASIQR…QIDHKADVVS (68 aa)) lie on the Cytoplasmic side of the membrane. A disordered region spans residues 186–215 (RDLREQPPPASTPGHGPSHRSTFSAPLPSP). The ITAM signature appears at 222-236 (YEELLYSDANIYCQI).

The protein belongs to the immunoglobulin superfamily. CEA family. In terms of assembly, interacts through its phosphorylated ITAM domain with the SH2 domain-containing cytoplasmic proteins involved in signaling processes during phagocytosis. In terms of processing, N-glycosylated. The cytoplasmic ITAM-like sequence becomes tyrosine phosphorylated by SRC family PTKs upon ligand-mediated receptor clustering and allows to initiate phagocytosis of bound ligand. Granulocytes.

It is found in the membrane. In terms of biological role, granulocyte orphan receptor that acts as an trigger efficient phagocytosis of attached particles. The sequence is that of Cell adhesion molecule CEACAM4 from Homo sapiens (Human).